A 140-amino-acid polypeptide reads, in one-letter code: Ribosome maturation factor RimP (140 aa).

It belongs to the RimP family.

It localises to the cytoplasm. In terms of biological role, required for maturation of 30S ribosomal subunits. The protein is Ribosome maturation factor RimP of Campylobacter fetus subsp. fetus (strain 82-40).